The primary structure comprises 165 residues: Cyclic pyranopterin monophosphate synthase (165 aa).

Residues 76 to 78 and 114 to 115 contribute to the substrate site; these read LCH and ME. The active site involves Asp-129.

The protein belongs to the MoaC family. Homohexamer; trimer of dimers.

It carries out the reaction (8S)-3',8-cyclo-7,8-dihydroguanosine 5'-triphosphate = cyclic pyranopterin phosphate + diphosphate. It functions in the pathway cofactor biosynthesis; molybdopterin biosynthesis. Catalyzes the conversion of (8S)-3',8-cyclo-7,8-dihydroguanosine 5'-triphosphate to cyclic pyranopterin monophosphate (cPMP). This Brucella abortus (strain 2308) protein is Cyclic pyranopterin monophosphate synthase.